The following is a 299-amino-acid chain: Taste receptor type 2 member 50 (299 aa).

A topological domain (extracellular) is located at residue Met-1. A helical transmembrane segment spans residues 2-22 (ITFLYIFFSILILVLFVLGNF). The Cytoplasmic segment spans residues 23 to 55 (ANGFIALVNFIDWVKRKKISSADQILTALAVSR). Residues 56-76 (IGLLWALLLNWYLTVLNPAFY) form a helical membrane-spanning segment. Topologically, residues 77 to 87 (SVELRITSYNA) are extracellular. A helical transmembrane segment spans residues 88-108 (WVVTNHFSMWLAASLSIFYLL). Over 109 to 126 (KIANFSNLIFLHLKRRVR) the chain is Cytoplasmic. The helical transmembrane segment at 127 to 147 (SVILVILLGTLIFLVCHLLVA) threads the bilayer. At 148–181 (NMDESMWAEEYEGNMTGKMKLRNTVHLSYLTVTT) the chain is on the extracellular side. Asn-161 carries an N-linked (GlcNAc...) asparagine glycan. The helical transmembrane segment at 182 to 202 (LWSFIPFTLSLISFLMLICSL) threads the bilayer. Over 203–229 (CKHLKKMQLHGEGSQDLSTKVHIKALQ) the chain is Cytoplasmic. A helical membrane pass occupies residues 230–250 (TLISFLLLCAIFFLFLIISVW). At 251-259 (SPRRLQNDP) the chain is on the extracellular side. The helical transmembrane segment at 260–280 (VVMVSKAVGNIYLAFDSFILI) threads the bilayer. Residues 281 to 299 (WRTKKLKHTFLLILCQIRC) lie on the Cytoplasmic side of the membrane.

The protein belongs to the G-protein coupled receptor T2R family.

It is found in the membrane. Functionally, receptor that may play a role in the perception of bitterness and is gustducin-linked. May play a role in sensing the chemical composition of the gastrointestinal content. The activity of this receptor may stimulate alpha gustducin, mediate PLC-beta-2 activation and lead to the gating of TRPM5. This chain is Taste receptor type 2 member 50 (TAS2R50), found in Gorilla gorilla gorilla (Western lowland gorilla).